The primary structure comprises 592 residues: Movement and RNA silencing protein VP6 (592 aa).

The segment at 450 to 469 is disordered; the sequence is SSDEENADDPNQGWNGTPVH.

It localises to the host cell junction. Its subcellular location is the host plasmodesma. In terms of biological role, transports viral genome to neighboring plant cells directly through plasmosdesmata, without any budding. The movement protein allows efficient cell to cell propagation, by bypassing the host cell wall barrier. Displays sequence non-specific nucleic acid binding activity. Acts as a suppressor of RNA-mediated gene silencing, also known as post-transcriptional gene silencing (PTGS), a mechanism of plant viral defense that limits the accumulation of viral RNAs. This is Movement and RNA silencing protein VP6 from Oryza latifolia (Indian wild rice).